The following is a 636-amino-acid chain: Biosynthetic arginine decarboxylase (636 aa).

Position 101 is an N6-(pyridoxal phosphate)lysine (Lys-101). Residue 286 to 296 (FDVGGGLAVDY) participates in substrate binding.

It belongs to the Orn/Lys/Arg decarboxylase class-II family. SpeA subfamily. Mg(2+) is required as a cofactor. Requires pyridoxal 5'-phosphate as cofactor.

The enzyme catalyses L-arginine + H(+) = agmatine + CO2. The protein operates within amine and polyamine biosynthesis; agmatine biosynthesis; agmatine from L-arginine: step 1/1. Its function is as follows. Catalyzes the biosynthesis of agmatine from arginine. The protein is Biosynthetic arginine decarboxylase of Shewanella amazonensis (strain ATCC BAA-1098 / SB2B).